The sequence spans 162 residues: Phosphopantetheine adenylyltransferase (162 aa).

Ser9 serves as a coordination point for substrate. ATP contacts are provided by residues 9–10 (SF) and His17. Substrate contacts are provided by Lys41, Thr73, and Arg87. ATP-binding positions include 88 to 90 (GLR), Glu98, and 122 to 128 (NQNISSS).

Belongs to the bacterial CoaD family. As to quaternary structure, homohexamer. It depends on Mg(2+) as a cofactor.

Its subcellular location is the cytoplasm. The enzyme catalyses (R)-4'-phosphopantetheine + ATP + H(+) = 3'-dephospho-CoA + diphosphate. The protein operates within cofactor biosynthesis; coenzyme A biosynthesis; CoA from (R)-pantothenate: step 4/5. Its function is as follows. Reversibly transfers an adenylyl group from ATP to 4'-phosphopantetheine, yielding dephospho-CoA (dPCoA) and pyrophosphate. The sequence is that of Phosphopantetheine adenylyltransferase from Leuconostoc mesenteroides subsp. mesenteroides (strain ATCC 8293 / DSM 20343 / BCRC 11652 / CCM 1803 / JCM 6124 / NCDO 523 / NBRC 100496 / NCIMB 8023 / NCTC 12954 / NRRL B-1118 / 37Y).